The sequence spans 339 residues: DNA-directed RNA polymerase subunit alpha (339 aa).

The tract at residues 1-234 is alpha N-terminal domain (alpha-NTD); sequence MIEKNWQELI…DQFQIFINFE (234 aa). An alpha C-terminal domain (alpha-CTD) region spans residues 251–339; sequence FNPALLRKVD…DLAKRFEDHV (89 aa).

This sequence belongs to the RNA polymerase alpha chain family. Homodimer. The RNAP catalytic core consists of 2 alpha, 1 beta, 1 beta' and 1 omega subunit. When a sigma factor is associated with the core the holoenzyme is formed, which can initiate transcription.

The catalysed reaction is RNA(n) + a ribonucleoside 5'-triphosphate = RNA(n+1) + diphosphate. DNA-dependent RNA polymerase catalyzes the transcription of DNA into RNA using the four ribonucleoside triphosphates as substrates. The chain is DNA-directed RNA polymerase subunit alpha from Maricaulis maris (strain MCS10) (Caulobacter maris).